The following is a 197-amino-acid chain: Peptidyl-tRNA hydrolase (197 aa).

Position 21 (Tyr-21) interacts with tRNA. Residue His-26 is the Proton acceptor of the active site. TRNA-binding residues include Tyr-72, Asn-74, and Asn-120.

The protein belongs to the PTH family. As to quaternary structure, monomer.

The protein resides in the cytoplasm. It carries out the reaction an N-acyl-L-alpha-aminoacyl-tRNA + H2O = an N-acyl-L-amino acid + a tRNA + H(+). In terms of biological role, hydrolyzes ribosome-free peptidyl-tRNAs (with 1 or more amino acids incorporated), which drop off the ribosome during protein synthesis, or as a result of ribosome stalling. Its function is as follows. Catalyzes the release of premature peptidyl moieties from peptidyl-tRNA molecules trapped in stalled 50S ribosomal subunits, and thus maintains levels of free tRNAs and 50S ribosomes. The protein is Peptidyl-tRNA hydrolase of Alkalilimnicola ehrlichii (strain ATCC BAA-1101 / DSM 17681 / MLHE-1).